The chain runs to 299 residues: HTH-type transcriptional regulator PgrR (299 aa).

An HTH lysR-type domain is found at 4-61; that stretch reads EEIADLMAFVVVAEERSFTRAAARLSMAQSALSQIVRRIEERLGLRLLTRTTRSVVPT. The H-T-H motif DNA-binding region spans 21–40; the sequence is FTRAAARLSMAQSALSQIVR.

It belongs to the LysR transcriptional regulatory family.

Regulates the expression of genes involved in peptidoglycan (PG) degradation. Could play a role in switch control between recycling and degradation of PG peptides. Negatively regulates the expression of the ycjY-ymjD-ymjC-mpaA operon by binding to the PgrR-box. In addition, other genes are predicted to be under the control of PgrR, including genes related to membrane formation and function. This chain is HTH-type transcriptional regulator PgrR (pgrR), found in Escherichia coli (strain K12).